The primary structure comprises 77 residues: Translation initiation factor IF-1, chloroplastic (77 aa).

The S1-like domain maps to 1–71 (MKEQKWTHEG…TRGRIIYRLR (71 aa)).

Belongs to the IF-1 family. Component of the 30S ribosomal translation pre-initiation complex which assembles on the 30S ribosome in the order IF-2 and IF-3, IF-1 and N-formylmethionyl-tRNA(fMet); mRNA recruitment can occur at any time during PIC assembly.

It localises to the plastid. It is found in the chloroplast. One of the essential components for the initiation of protein synthesis. Stabilizes the binding of IF-2 and IF-3 on the 30S subunit to which N-formylmethionyl-tRNA(fMet) subsequently binds. Helps modulate mRNA selection, yielding the 30S pre-initiation complex (PIC). Upon addition of the 50S ribosomal subunit IF-1, IF-2 and IF-3 are released leaving the mature 70S translation initiation complex. The protein is Translation initiation factor IF-1, chloroplastic of Coffea arabica (Arabian coffee).